A 417-amino-acid polypeptide reads, in one-letter code: Serine hydroxymethyltransferase (417 aa).

(6S)-5,6,7,8-tetrahydrofolate-binding positions include Leu120 and 124–126; that span reads GHL. At Lys229 the chain carries N6-(pyridoxal phosphate)lysine. A (6S)-5,6,7,8-tetrahydrofolate-binding site is contributed by 354–356; that stretch reads SPF.

It belongs to the SHMT family. Homodimer. It depends on pyridoxal 5'-phosphate as a cofactor.

It localises to the cytoplasm. It catalyses the reaction (6R)-5,10-methylene-5,6,7,8-tetrahydrofolate + glycine + H2O = (6S)-5,6,7,8-tetrahydrofolate + L-serine. It participates in one-carbon metabolism; tetrahydrofolate interconversion. Its pathway is amino-acid biosynthesis; glycine biosynthesis; glycine from L-serine: step 1/1. Its function is as follows. Catalyzes the reversible interconversion of serine and glycine with tetrahydrofolate (THF) serving as the one-carbon carrier. This reaction serves as the major source of one-carbon groups required for the biosynthesis of purines, thymidylate, methionine, and other important biomolecules. Also exhibits THF-independent aldolase activity toward beta-hydroxyamino acids, producing glycine and aldehydes, via a retro-aldol mechanism. The sequence is that of Serine hydroxymethyltransferase from Acinetobacter baumannii (strain AB307-0294).